Consider the following 36-residue polypeptide: Ostricacin-1 (36 aa).

3 cysteine pairs are disulfide-bonded: cysteine 3–cysteine 29, cysteine 8–cysteine 23, and cysteine 13–cysteine 30.

Its subcellular location is the secreted. In terms of biological role, has antibacterial activity against the Gram-positive bacteria S.aureus 1056 MRSA (MIC=1.25 ug/ml) and S.aureus NCTC 4163 (MIC=6.7 ug/ml), and the Gram-negative bacteria E.coli O157:H7 (MIC=0.96 ug/ml) and E.coli 0111 (MIC=6.7 ug/ml). Does not have antifungal activity against the yeast C.albicans 3153A. The sequence is that of Ostricacin-1 from Struthio camelus (Common ostrich).